Consider the following 551-residue polypeptide: Methionine--tRNA ligase (551 aa).

Positions 12-22 match the 'HIGH' region motif; that stretch reads PYANGPLHFGH. The Zn(2+) site is built by C144, C147, C157, and C160. A 'KMSKS' region motif is present at residues 330–334; that stretch reads QFSKS. Position 333 (K333) interacts with ATP.

It belongs to the class-I aminoacyl-tRNA synthetase family. MetG type 1 subfamily. In terms of assembly, monomer. Zn(2+) is required as a cofactor.

It is found in the cytoplasm. It catalyses the reaction tRNA(Met) + L-methionine + ATP = L-methionyl-tRNA(Met) + AMP + diphosphate. Functionally, is required not only for elongation of protein synthesis but also for the initiation of all mRNA translation through initiator tRNA(fMet) aminoacylation. The polypeptide is Methionine--tRNA ligase (metG) (Chlamydia pneumoniae (Chlamydophila pneumoniae)).